A 162-amino-acid chain; its full sequence is Probable chemoreceptor glutamine deamidase CheD (162 aa).

Belongs to the CheD family.

The catalysed reaction is L-glutaminyl-[protein] + H2O = L-glutamyl-[protein] + NH4(+). Probably deamidates glutamine residues to glutamate on methyl-accepting chemotaxis receptors (MCPs), playing an important role in chemotaxis. The polypeptide is Probable chemoreceptor glutamine deamidase CheD (Clostridium kluyveri (strain ATCC 8527 / DSM 555 / NBRC 12016 / NCIMB 10680 / K1)).